Reading from the N-terminus, the 122-residue chain is Large ribosomal subunit protein uL14 (122 aa).

This sequence belongs to the universal ribosomal protein uL14 family. As to quaternary structure, part of the 50S ribosomal subunit. Forms a cluster with proteins L3 and L19. In the 70S ribosome, L14 and L19 interact and together make contacts with the 16S rRNA in bridges B5 and B8.

Binds to 23S rRNA. Forms part of two intersubunit bridges in the 70S ribosome. This is Large ribosomal subunit protein uL14 from Chlamydia caviae (strain ATCC VR-813 / DSM 19441 / 03DC25 / GPIC) (Chlamydophila caviae).